A 561-amino-acid chain; its full sequence is Eukaryotic translation initiation factor 3 subunit D-1 (561 aa).

The tract at residues Val98–Ser164 is disordered. Basic residues predominate over residues Lys100–Asn121. Thr128 carries the phosphothreonine modification. Residues Glu289–Pro303 are RNA gate.

The protein belongs to the eIF-3 subunit D family. In terms of assembly, component of the eukaryotic translation initiation factor 3 (eIF-3) complex. The eIF-3 complex interacts with pix.

The protein localises to the cytoplasm. Functionally, mRNA cap-binding component of the eukaryotic translation initiation factor 3 (eIF-3) complex, which is involved in protein synthesis of a specialized repertoire of mRNAs and, together with other initiation factors, stimulates binding of mRNA and methionyl-tRNAi to the 40S ribosome. The eIF-3 complex specifically targets and initiates translation of a subset of mRNAs involved in cell proliferation. In the eIF-3 complex, eif3d specifically recognizes and binds the 7-methylguanosine cap of a subset of mRNAs. This chain is Eukaryotic translation initiation factor 3 subunit D-1, found in Drosophila ananassae (Fruit fly).